Here is a 183-residue protein sequence, read N- to C-terminus: Bifunctional protein PyrR (183 aa).

Residues 98 to 110 (VVLVDDVLYTGRT) carry the PRPP-binding motif.

Belongs to the purine/pyrimidine phosphoribosyltransferase family. PyrR subfamily.

It catalyses the reaction UMP + diphosphate = 5-phospho-alpha-D-ribose 1-diphosphate + uracil. Regulates the transcription of the pyrimidine nucleotide (pyr) operon in response to exogenous pyrimidines. Its function is as follows. Also displays a weak uracil phosphoribosyltransferase activity which is not physiologically significant. This is Bifunctional protein PyrR from Roseiflexus sp. (strain RS-1).